The sequence spans 128 residues: Cionin (128 aa).

The N-terminal stretch at 1–22 is a signal peptide; it reads MGSNIVIYFSIIVIVTLNVNGV. Residues 23–108 constitute a propeptide that is removed on maturation; that stretch reads PASDLFKSVS…NQGHMQRMDR (86 aa). Sulfotyrosine occurs at positions 110 and 111. Phe116 bears the Phenylalanine amide mark. The propeptide occupies 120–128; the sequence is AIEDVDYEY.

Belongs to the gastrin/cholecystokinin family. Expressed in both the gut and the neural ganglion.

It is found in the secreted. This Ciona intestinalis (Transparent sea squirt) protein is Cionin.